The primary structure comprises 56 residues: Ribosome biogenesis protein Nop10 (56 aa).

It belongs to the NOP10 family.

In terms of biological role, involved in ribosome biogenesis; more specifically in 18S rRNA pseudouridylation and in cleavage of pre-rRNA. The protein is Ribosome biogenesis protein Nop10 of Methanococcoides burtonii (strain DSM 6242 / NBRC 107633 / OCM 468 / ACE-M).